The chain runs to 142 residues: MAKKVQAYVKLQVAAGMANPSPPVGPALGQQGVNIMEFCKAFNAKTDSIEKGLPIPVVITVYADRSFTFVTKTPPAAVLLKKAAGIKSGSGKPNKDKVGKISRAQLQEIAQTKAADMTGADIEAMTRSIEGTARSMGLVVED.

Belongs to the universal ribosomal protein uL11 family. In terms of assembly, part of the ribosomal stalk of the 50S ribosomal subunit. Interacts with L10 and the large rRNA to form the base of the stalk. L10 forms an elongated spine to which L12 dimers bind in a sequential fashion forming a multimeric L10(L12)X complex. Post-translationally, one or more lysine residues are methylated.

Functionally, forms part of the ribosomal stalk which helps the ribosome interact with GTP-bound translation factors. In Shigella boydii serotype 18 (strain CDC 3083-94 / BS512), this protein is Large ribosomal subunit protein uL11.